Reading from the N-terminus, the 248-residue chain is NLP effector protein Pc121494 (248 aa).

The first 19 residues, 1-19, serve as a signal peptide directing secretion; that stretch reads MKFIAVLIAAIASLSAVQA. The Hepta-peptide GHRHDWE motif signature appears at 124–130; that stretch reads GHRNGWE. The N-linked (GlcNAc...) asparagine glycan is linked to Asn143.

The protein belongs to the Necrosis inducing protein (NPP1) family.

It is found in the secreted. Its function is as follows. Secreted effector that contributes strongly to virulence during infection by P.capsici. The protein is NLP effector protein Pc121494 of Phytophthora capsici.